A 288-amino-acid chain; its full sequence is 4-diphosphocytidyl-2-C-methyl-D-erythritol kinase (288 aa).

Residue Lys10 is part of the active site. 99–109 serves as a coordination point for ATP; sequence PMGGGLGGGSS. Asp141 is an active-site residue.

The protein belongs to the GHMP kinase family. IspE subfamily. In terms of assembly, homodimer.

The catalysed reaction is 4-CDP-2-C-methyl-D-erythritol + ATP = 4-CDP-2-C-methyl-D-erythritol 2-phosphate + ADP + H(+). It participates in isoprenoid biosynthesis; isopentenyl diphosphate biosynthesis via DXP pathway; isopentenyl diphosphate from 1-deoxy-D-xylulose 5-phosphate: step 3/6. Functionally, catalyzes the phosphorylation of the position 2 hydroxy group of 4-diphosphocytidyl-2C-methyl-D-erythritol. The polypeptide is 4-diphosphocytidyl-2-C-methyl-D-erythritol kinase (Serratia proteamaculans (strain 568)).